The primary structure comprises 314 residues: 3'-5' exoribonuclease YhaM (314 aa).

Residues 163–279 enclose the HD domain; it reads HVVSMLDLAK…LHYIDNLDAK (117 aa).

It belongs to the YhaM family.

Shows a 3'-5' exoribonuclease activity. The sequence is that of 3'-5' exoribonuclease YhaM from Bacillus mycoides (strain KBAB4) (Bacillus weihenstephanensis).